The chain runs to 86 residues: Precursor of CEP4 (86 aa).

The signal sequence occupies residues 1 to 30 (MVSRGCSITVLFRFLIVLLVIQVHFENTKA). The propeptide occupies 31 to 64 (ARHAPVVSWSPPEPPKDDFVWYHKINRFKNIEQD). The interval 63-86 (QDAFRPTHQGPSQGIGHKNPPGAP) is disordered. Hydroxyproline is present on residues Pro68 and Pro73. Positions 80 to 86 (KNPPGAP) are excised as a propeptide.

Belongs to the C-terminally encoded plant signaling peptide (CEP) family. Interacts with CEP receptors (e.g. CEPR1 and CEPR2). The mature small signaling peptide is generated by proteolytic processing of the longer precursor. In terms of tissue distribution, expressed at low levels in flowers. Present in lateral roots, shoot apical meristem (SAM), flowers and siliques.

It is found in the secreted. The protein resides in the extracellular space. It localises to the apoplast. Functionally, extracellular signaling peptide that represses primary root growth rate. Promotes shoot growth and modulates leaf morphology. Regulates systemic nitrogen (N)-demand signaling. Mediates up-regulation of genes involved in N uptake and assimilation pathways. The protein is Precursor of CEP4 of Arabidopsis thaliana (Mouse-ear cress).